We begin with the raw amino-acid sequence, 102 residues long: Large ribosomal subunit protein bL21 (102 aa).

Belongs to the bacterial ribosomal protein bL21 family. In terms of assembly, part of the 50S ribosomal subunit. Contacts protein L20.

This protein binds to 23S rRNA in the presence of protein L20. This Bacillus subtilis (strain 168) protein is Large ribosomal subunit protein bL21.